A 352-amino-acid chain; its full sequence is Phosphoribosylformylglycinamidine cyclo-ligase (352 aa).

The protein belongs to the AIR synthase family.

The protein localises to the cytoplasm. The catalysed reaction is 2-formamido-N(1)-(5-O-phospho-beta-D-ribosyl)acetamidine + ATP = 5-amino-1-(5-phospho-beta-D-ribosyl)imidazole + ADP + phosphate + H(+). It functions in the pathway purine metabolism; IMP biosynthesis via de novo pathway; 5-amino-1-(5-phospho-D-ribosyl)imidazole from N(2)-formyl-N(1)-(5-phospho-D-ribosyl)glycinamide: step 2/2. This is Phosphoribosylformylglycinamidine cyclo-ligase from Stenotrophomonas maltophilia (strain K279a).